The following is a 432-amino-acid chain: Trigger factor (432 aa).

The 86-residue stretch at 163–248 folds into the PPIase FKBP-type domain; sequence GDIAVIDFEG…LKALNKKELP (86 aa).

Belongs to the FKBP-type PPIase family. Tig subfamily.

The protein localises to the cytoplasm. It carries out the reaction [protein]-peptidylproline (omega=180) = [protein]-peptidylproline (omega=0). In terms of biological role, involved in protein export. Acts as a chaperone by maintaining the newly synthesized protein in an open conformation. Functions as a peptidyl-prolyl cis-trans isomerase. This chain is Trigger factor, found in Thermoanaerobacter pseudethanolicus (strain ATCC 33223 / 39E) (Clostridium thermohydrosulfuricum).